We begin with the raw amino-acid sequence, 1034 residues long: Enteropeptidase (1034 aa).

Residues 1–51 (MGSKRIIPSRHRSLSTYEVMFTALFAILMVLCAGLIAVSWLTIKGSEKDAA) constitute a propeptide that is removed on maturation. The Cytoplasmic portion of the chain corresponds to 2–18 (GSKRIIPSRHRSLSTYE). The helical; Signal-anchor for type II membrane protein transmembrane segment at 19–47 (VMFTALFAILMVLCAGLIAVSWLTIKGSE) threads the bilayer. Topologically, residues 48–1034 (KDAALGKSHE…FTEWIQSFLH (987 aa)) are extracellular. Residues 54-169 (KSHEARGTMK…NSIDITESLE (116 aa)) enclose the SEA domain. N-linked (GlcNAc...) asparagine glycosylation is found at asparagine 116, asparagine 147, asparagine 170, and asparagine 194. Positions 197–238 (IECLPGSRPCADALKCIAVDLFCDGELNCPDGSDEDSKICAT) constitute an LDL-receptor class A 1 domain. 4 disulfides stabilise this stretch: cysteine 199–cysteine 212, cysteine 206–cysteine 225, cysteine 219–cysteine 236, and cysteine 240–cysteine 268. The CUB 1 domain maps to 240–349 (CDGKFLLTES…IGFNATYTAF (110 aa)). N-linked (GlcNAc...) asparagine glycans are attached at residues asparagine 283, asparagine 343, asparagine 350, asparagine 403, asparagine 455, asparagine 485, asparagine 518, asparagine 549, and asparagine 645. An MAM domain is found at 357 to 519 (DEKINCNFED…ISLTYGICNV (163 aa)). A disulfide bridge links cysteine 539 with cysteine 567. The region spanning 539 to 649 (CGGPFELWEP…GGFKANFTTG (111 aa)) is the CUB 2 domain. The region spanning 656 to 694 (EPCKEDNFQCENGECVLLVNLCDGFSHCKDGSDEAHCVR) is the LDL-receptor class A 2 domain. Disulfide bonds link cysteine 658/cysteine 670, cysteine 665/cysteine 683, and cysteine 677/cysteine 692. The region spanning 693–786 (VRFLNGTANN…LILLQCNHKS (94 aa)) is the SRCR domain. Residues asparagine 697, asparagine 701, asparagine 721, asparagine 740, and asparagine 761 are each glycosylated (N-linked (GlcNAc...) asparagine). 6 disulfide bridges follow: cysteine 772-cysteine 782, cysteine 787-cysteine 911, cysteine 825-cysteine 841, cysteine 925-cysteine 992, cysteine 956-cysteine 971, and cysteine 982-cysteine 1010. In terms of domain architecture, Peptidase S1 spans 800–1034 (IVGGNDSREG…FTEWIQSFLH (235 aa)). N-linked (GlcNAc...) asparagine glycosylation occurs at asparagine 804. The active-site Charge relay system is the histidine 840. N-linked (GlcNAc...) asparagine glycosylation is present at asparagine 863. The Charge relay system role is filled by aspartate 891. N-linked (GlcNAc...) asparagine glycosylation is found at asparagine 902 and asparagine 964. Serine 986 acts as the Charge relay system in catalysis.

The protein belongs to the peptidase S1 family. Heterotrimer of a catalytic (light) chain, a multidomain (heavy) chain, and a mini chain. Post-translationally, the chains are derived from a single precursor that is cleaved by a trypsin-like protease. In terms of processing, the mini chain may be cleaved by elastase.

It localises to the membrane. The catalysed reaction is Activation of trypsinogen by selective cleavage of 6-Lys-|-Ile-7 bond.. Its function is as follows. Responsible for initiating activation of pancreatic proteolytic proenzymes (trypsin, chymotrypsin and carboxypeptidase A). It catalyzes the conversion of trypsinogen to trypsin which in turn activates other proenzymes including chymotrypsinogen, procarboxypeptidases, and proelastases. The polypeptide is Enteropeptidase (TMPRSS15) (Sus scrofa (Pig)).